A 381-amino-acid polypeptide reads, in one-letter code: Probable glucuronosyltransferase Os04g0103100 (381 aa).

Over 1 to 69 the chain is Cytoplasmic; the sequence is MASIRRPHSP…HTSFRRPLPR (69 aa). The disordered stretch occupies residues 21 to 50; sequence HLGPFASSSPPSSPLRHSSSSSSPRSAAHH. Residues 26–46 show a composition bias toward low complexity; that stretch reads ASSSPPSSPLRHSSSSSSPRS. Residues 70–90 form a helical; Signal-anchor for type II membrane protein membrane-spanning segment; sequence FAAFFLLGSFLGLLHFLSHLP. Residues 91–381 lie on the Lumenal side of the membrane; sequence RPLGPIPNPN…TDLDVIIPLK (291 aa). The tract at residues 96-122 is disordered; it reads IPNPNSHHRHRDPFPILQHPHPPSTPH. N-linked (GlcNAc...) asparagine glycosylation is found at asparagine 194 and asparagine 296.

The protein belongs to the glycosyltransferase 43 family.

The protein resides in the golgi apparatus membrane. Involved in the synthesis of glucuronoxylan hemicellulose in secondary cell walls. The sequence is that of Probable glucuronosyltransferase Os04g0103100 from Oryza sativa subsp. japonica (Rice).